A 476-amino-acid chain; its full sequence is BTB/POZ domain-containing protein KCTD8 (476 aa).

In terms of domain architecture, BTB spans 44–122 (EVVELNVGGQ…LRDKQLALPE (79 aa)). Ser-78 carries the phosphoserine modification. Omega-N-methylarginine is present on Arg-80. The disordered stretch occupies residues 331-412 (SPKQEHEDRK…WMPPPDKRRN (82 aa)). Over residues 333–349 (KQEHEDRKRDKVTDKGS) the composition is skewed to basic and acidic residues. Residues 350–391 (ESGTSCNELSTSSCDSHSEASTPQDNPANTQQAAAHQPNTLT) are compositionally biased toward polar residues. Position 413 is a phosphoserine (Ser-413).

Interacts as a tetramer with GABBR1 and GABBR2.

It localises to the presynaptic cell membrane. The protein resides in the postsynaptic cell membrane. Its function is as follows. Auxiliary subunit of GABA-B receptors that determine the pharmacology and kinetics of the receptor response. Increases agonist potency and markedly alter the G-protein signaling of the receptors by accelerating onset and promoting desensitization. This is BTB/POZ domain-containing protein KCTD8 (Kctd8) from Mus musculus (Mouse).